We begin with the raw amino-acid sequence, 750 residues long: Cullin-5 (750 aa).

The Cullin neddylation domain maps to 678-739 (RFFKLQAAIV…QEYIRRTTDD (62 aa)). A Glycyl lysine isopeptide (Lys-Gly) (interchain with G-Cter in NEDD8) cross-link involves residue K691.

The protein belongs to the cullin family. In terms of processing, neddylated; which enhances the ubiquitination activity of SCF-like complex.

It participates in protein modification; protein ubiquitination. Its function is as follows. Probable core component of cullin-based SCF-like E3 ubiquitin-protein ligase complexes which mediate the ubiquitination and subsequent proteasomal degradation of target proteins. The E3 ubiquitin-protein ligase activity of the complex is dependent on the neddylation of the cullin subunit. The chain is Cullin-5 (culE) from Dictyostelium discoideum (Social amoeba).